We begin with the raw amino-acid sequence, 677 residues long: MMLSAVLRRTAPAPRLFLGLIKSPSLQSRGGAYNRSVITGDRGEPQRLRTAAWVRPGASSVLFPGRGAATGGRRGERTEIPYLTAASSGRGPSPEETLPGQDSWNGVPNKAGLGMWALAMALVVQCYNKNPSNKDAALMEAARANNVQEVRRLLSEGADVNARHKLGWTALMVAAISHNESVVQVLLAAGADPNLGDDFSSVYKTANEQGVHSLEVLVTREDDFNNRLNHRASFKGCTALHYAVLADDYSIVKELLGGGANPLQRNEMGHTPLDYAREGEVMKLLKTSETKYMEKQRKREAEERRRFPLEQRLEQHIIGQESAIATVGAAIRRKENGWYDEEHPLVFLFLGSSGIGKTELAKQTAKYMHKDAKKGFIRLDMSEFQERHEVAKFIGSPPGYIGHEEGGQLTKKLKQCPNAVVLFDEVDKAHPDVLTIMLQLFDEGRLTDGKGKTIDCKDAIFIMTSNVASDEIAQHALQLRQEALEMSRNRIAENLGDVQISDKITISKNFKENMIRPILKAHFRRDEFLGRINEIVYFLPFCHSELIQLVNKELNFWAKRAKQRHNITLLWDREVADVLVDGYNVQYGARSIKHEVERRVVNQLAAAYEQDLLPGGCTLRITVEDSDKQLLKSPELPSPQAEKRPPTLRLEIIDKDSKTHKLDIQAPLHPEKVCYTI.

A mitochondrion-targeting transit peptide spans 1 to 57 (MMLSAVLRRTAPAPRLFLGLIKSPSLQSRGGAYNRSVITGDRGEPQRLRTAAWVRPG). The tract at residues 64 to 103 (PGRGAATGGRRGERTEIPYLTAASSGRGPSPEETLPGQDS) is disordered. Residues 92 to 126 (PSPEETLPGQDSWNGVPNKAGLGMWALAMALVVQC) form an autoinhibitory region. ANK repeat units lie at residues 133-162 (NKDAALMEAARANNVQEVRRLLSEGADVNA), 166-195 (LGWTALMVAAISHNESVVQVLLAAGADPNL), 235-265 (KGCTALHYAVLADDYSIVKELLGGGANPLQR), and 268-297 (MGHTPLDYAREGEVMKLLKTSETKYMEKQR). ATP contacts are provided by histidine 316, isoleucine 318, serine 353, glycine 354, isoleucine 355, glycine 356, lysine 357, threonine 358, glutamate 425, and asparagine 466. The segment at 477 to 505 (LQLRQEALEMSRNRIAENLGDVQISDKIT) is regulatory; slows ATPase and disaggregase activities. Arginine 531 contributes to the ATP binding site. Lysine 559 is subject to N6-acetyllysine. Arginine 590 provides a ligand contact to ATP.

This sequence belongs to the ClpA/ClpB family. As to quaternary structure, homododecamer when substrate-bound; the homododecamer consists of 2 homohexamers stacked head-to-head via ANK repeat-mediated interactions. The active substrate-bound form is likely to exist in a dynamic equilibrium between homohexamers and homododecamers. Homotetradecamer in the unbound state which is remodeled upon substrate binding into the homododecamer. Interacts with PHB and PHB2. Interacts with MAVS; the interaction is enhanced by Sendai virus infection. In terms of processing, proteolytically cleaved by protease PARL. ATP-dependent protein disaggregase activity is stimulated by PARL-mediated cleavage of the N-terminal autoinhibitory peptide.

The protein localises to the mitochondrion intermembrane space. The catalysed reaction is ATP + H2O = ADP + phosphate + H(+). With respect to regulation, disaggregase activity is inhibited by ADP. Functionally, functions as a regulatory ATPase and participates in secretion/protein trafficking process. Has ATP-dependent protein disaggregase activity and is required to maintain the solubility of key mitochondrial proteins. Involved in mitochondrial-mediated antiviral innate immunity, activates RIG-I-mediated signal transduction and production of IFNB1 and pro-inflammatory cytokine IL6. Plays a role in granulocyte differentiation. This Rattus norvegicus (Rat) protein is Mitochondrial disaggregase.